Reading from the N-terminus, the 252-residue chain is Probable S-methyl-5'-thioinosine phosphorylase (252 aa).

Phosphate contacts are provided by residues threonine 8 and 44 to 45 (RH). Methionine 173 serves as a coordination point for substrate. Threonine 174 is a binding site for phosphate. Position 197 to 199 (197 to 199 (NYA)) interacts with substrate.

This sequence belongs to the PNP/MTAP phosphorylase family. MTAP subfamily. Homotrimer.

The catalysed reaction is S-methyl-5'-thioinosine + phosphate = 5-(methylsulfanyl)-alpha-D-ribose 1-phosphate + hypoxanthine. Its pathway is purine metabolism; purine nucleoside salvage. In terms of biological role, catalyzes the reversible phosphorylation of S-methyl-5'-thioinosine (MTI) to hypoxanthine and 5-methylthioribose-1-phosphate. Involved in the breakdown of S-methyl-5'-thioadenosine (MTA), a major by-product of polyamine biosynthesis. Catabolism of (MTA) occurs via deamination to MTI and phosphorolysis to hypoxanthine. This chain is Probable S-methyl-5'-thioinosine phosphorylase, found in Methanocaldococcus jannaschii (strain ATCC 43067 / DSM 2661 / JAL-1 / JCM 10045 / NBRC 100440) (Methanococcus jannaschii).